Here is a 319-residue protein sequence, read N- to C-terminus: Serine acetyltransferase, plasmid (319 aa).

Belongs to the transferase hexapeptide repeat family.

It is found in the cytoplasm. The enzyme catalyses L-serine + acetyl-CoA = O-acetyl-L-serine + CoA. It participates in amino-acid biosynthesis; L-cysteine biosynthesis; L-cysteine from L-serine: step 1/2. The polypeptide is Serine acetyltransferase, plasmid (srpH) (Synechococcus elongatus (strain ATCC 33912 / PCC 7942 / FACHB-805) (Anacystis nidulans R2)).